The sequence spans 99 residues: Cytochrome c oxidase subunit 4 isoform 1, mitochondrial (99 aa).

Residues 1–73 lie on the Mitochondrial matrix side of the membrane; the sequence is SVVKSEDFTL…SFAEMNRRSN (73 aa). The residue at position 4 (K4) is an N6-acetyllysine; alternate. K4 is modified (N6-succinyllysine; alternate). K28 is subject to N6-acetyllysine. Residues S31 and S33 each carry the phosphoserine modification. An N6-acetyllysine; alternate modification is found at K35. At K35 the chain carries N6-succinyllysine; alternate. At K42 the chain carries N6-acetyllysine. The chain crosses the membrane as a helical span at residues 74 to 99; the sequence is EWKTVVGTAMFFIGITALVIMWEKLY.

The protein belongs to the cytochrome c oxidase IV family. As to quaternary structure, component of the cytochrome c oxidase (complex IV, CIV), a multisubunit enzyme composed of 14 subunits. The complex is composed of a catalytic core of 3 subunits MT-CO1, MT-CO2 and MT-CO3, encoded in the mitochondrial DNA, and 11 supernumerary subunits COX4I, COX5A, COX5B, COX6A, COX6B, COX6C, COX7A, COX7B, COX7C, COX8 and NDUFA4, which are encoded in the nuclear genome. The complex exists as a monomer or a dimer and forms supercomplexes (SCs) in the inner mitochondrial membrane with NADH-ubiquinone oxidoreductase (complex I, CI) and ubiquinol-cytochrome c oxidoreductase (cytochrome b-c1 complex, complex III, CIII), resulting in different assemblies (supercomplex SCI(1)III(2)IV(1) and megacomplex MCI(2)III(2)IV(2)). Interacts with PHB2; the interaction decreases in absence of SPHK2. Interacts with AFG1L. Interacts with ABCB7; this interaction allows the regulation of cellular iron homeostasis and cellular reactive oxygen species (ROS) levels in cardiomyocytes. Interacts with FLVCR2; this interaction occurs in the absence of heme and is disrupted upon heme binding. Interacts with IRGC.

It is found in the mitochondrion inner membrane. Its pathway is energy metabolism; oxidative phosphorylation. Its function is as follows. Component of the cytochrome c oxidase, the last enzyme in the mitochondrial electron transport chain which drives oxidative phosphorylation. The respiratory chain contains 3 multisubunit complexes succinate dehydrogenase (complex II, CII), ubiquinol-cytochrome c oxidoreductase (cytochrome b-c1 complex, complex III, CIII) and cytochrome c oxidase (complex IV, CIV), that cooperate to transfer electrons derived from NADH and succinate to molecular oxygen, creating an electrochemical gradient over the inner membrane that drives transmembrane transport and the ATP synthase. Cytochrome c oxidase is the component of the respiratory chain that catalyzes the reduction of oxygen to water. Electrons originating from reduced cytochrome c in the intermembrane space (IMS) are transferred via the dinuclear copper A center (CU(A)) of subunit 2 and heme A of subunit 1 to the active site in subunit 1, a binuclear center (BNC) formed by heme A3 and copper B (CU(B)). The BNC reduces molecular oxygen to 2 water molecules using 4 electrons from cytochrome c in the IMS and 4 protons from the mitochondrial matrix. In Mandrillus sphinx (Mandrill), this protein is Cytochrome c oxidase subunit 4 isoform 1, mitochondrial (COX4I1).